The primary structure comprises 60 residues: Cecropin-B1 (60 aa).

The first 24 residues, 1–24 (MNFSKVFALVLLIGLVLLTGHTEA), serve as a signal peptide directing secretion.

It belongs to the cecropin family.

The protein resides in the secreted. In terms of biological role, putative antimicrobial peptide. Partially neutralizes lipopolysaccharides (LPS). Exhibits anti-inflammatory properties: inhibits LPS-induced iNOS/NOS2 transcription, nitric oxide (NO) and pro-inflammatory cytokine production in mouse macrophages and human peripheral blood mononuclear cells (PBMCs); inhibits LPS-induced activation of MAPK and NF-kappa-B signaling pathways in mouse macrophages. This is Cecropin-B1 from Aedes aegypti (Yellowfever mosquito).